Here is a 365-residue protein sequence, read N- to C-terminus: Autoinducer 2-binding periplasmic protein LuxP (365 aa).

Positions 1 to 23 are cleaved as a signal peptide; it reads MKKALLFSLISMVGFSPASQATQ.

This sequence belongs to the bacterial solute-binding protein 2 family.

The protein resides in the periplasm. Functionally, binds to the signaling molecule autoinducer 2 (AI-2), a furanosyl borate diester, (3a-methyl-5,6-dihydrofuro-[2,3d][1,3,2]dioxaborole-2,2,6,6a-tetraol). This complex then interacts with the LuxQ sensor protein. The sequence is that of Autoinducer 2-binding periplasmic protein LuxP (luxP) from Vibrio harveyi (Beneckea harveyi).